Here is a 576-residue protein sequence, read N- to C-terminus: Small ribosomal subunit protein mS80 (rPPR6) (576 aa).

The N-terminal 76 residues, 1–76 (MLRSFLCRSQ…SLPADEIPIS (76 aa)), are a transit peptide targeting the mitochondrion. PPR repeat units lie at residues 230-264 (NLEILNELIALFGKLGKSKAAFDVFSKTEEFGFTP), 265-299 (NAKTYYLTLEALCKRSFMDWACSVCEKMLKSGVLS), 300-336 (EGEQMGNIITWFCKEGKAEEAYSVYELAKTKEKSLPP), 341-370 (TLITALCKNDGTITFAQEMLGDLSGEARRR), 371-405 (GIKPFSDVIHSLCRMRNVKDAKALLLDMISKGPAP), 406-440 (GNAVFNLVVHACSKTGDLDEAKEVLKLMESRGLKP), 441-475 (DVYTYTVIISGYAKGGMMDEAQEILAEAKKKHKKL), 476-510 (SPVTYHALIRGYCKIEEYDEALKLLNEMDRFGVQP), and 511-546 (NADEYNKLIQSFCLKALDWEKAEVLFEEMKQKGLHL).

This sequence belongs to the PPR family. P subfamily. In terms of assembly, component of the mitochondrial ribosome small subunit.

Its subcellular location is the mitochondrion. The protein is Small ribosomal subunit protein mS80 (rPPR6) of Arabidopsis thaliana (Mouse-ear cress).